A 338-amino-acid polypeptide reads, in one-letter code: Fructose-1,6-bisphosphatase class 1 (338 aa).

Mg(2+) contacts are provided by Glu-92, Asp-114, Leu-116, and Asp-117. Substrate contacts are provided by residues 117 to 120 (DGSS), Asn-210, Tyr-243, and Lys-276. Glu-282 provides a ligand contact to Mg(2+).

Belongs to the FBPase class 1 family. Homotetramer. The cofactor is Mg(2+).

The protein localises to the cytoplasm. The catalysed reaction is beta-D-fructose 1,6-bisphosphate + H2O = beta-D-fructose 6-phosphate + phosphate. It functions in the pathway carbohydrate biosynthesis; gluconeogenesis. This Maridesulfovibrio salexigens (strain ATCC 14822 / DSM 2638 / NCIMB 8403 / VKM B-1763) (Desulfovibrio salexigens) protein is Fructose-1,6-bisphosphatase class 1.